The chain runs to 311 residues: MAVDIQPACLGLYCGKTLLFKNGSSEIYGECGVCPRGQRTNAQKYCQPCTESPELYDWLYLGFMAMLPLVLHWFFIEWYSGKKSSSALFQHITALFECTMAAIITLLVSDPVGVLYIRSCRVLMLSDWYTMLYNPSPDYVTTVHCTHEAVYPLYTIVFVYYAFCLVLMMLLRPLLVKKIACGLGKSDRFKSIYAALYFFPILTVLQAVGGGLLYYAFPYIILVLSLVTLAVYMSASEIENCYDLLVRKKRLIVLFSHWLLHAYGIVSISRVDRLEHDLPLLALVPTPALFYLFTAKFTEPSRILSEGANGH.

Over 1–57 (MAVDIQPACLGLYCGKTLLFKNGSSEIYGECGVCPRGQRTNAQKYCQPCTESPELYD) the chain is Lumenal. Asparagine 22 is a glycosylation site (N-linked (GlcNAc...) asparagine). Residues 58-78 (WLYLGFMAMLPLVLHWFFIEW) form a helical membrane-spanning segment. The Cytoplasmic portion of the chain corresponds to 79 to 87 (YSGKKSSSA). A helical membrane pass occupies residues 88–108 (LFQHITALFECTMAAIITLLV). The Lumenal portion of the chain corresponds to 109–149 (SDPVGVLYIRSCRVLMLSDWYTMLYNPSPDYVTTVHCTHEA). A helical membrane pass occupies residues 150–170 (VYPLYTIVFVYYAFCLVLMML). Topologically, residues 171–188 (LRPLLVKKIACGLGKSDR) are cytoplasmic. A helical membrane pass occupies residues 189–209 (FKSIYAALYFFPILTVLQAVG). Glycine 210 is a topological domain (lumenal). A helical transmembrane segment spans residues 211–231 (GLLYYAFPYIILVLSLVTLAV). Over 232 to 250 (YMSASEIENCYDLLVRKKR) the chain is Cytoplasmic. A helical transmembrane segment spans residues 251 to 271 (LIVLFSHWLLHAYGIVSISRV). The Lumenal portion of the chain corresponds to 272-277 (DRLEHD). The helical transmembrane segment at 278 to 298 (LPLLALVPTPALFYLFTAKFT) threads the bilayer. The Cytoplasmic segment spans residues 299-311 (EPSRILSEGANGH).

As to quaternary structure, interacts with RNF5 and MAPK8, but not with MAPK9. Binding to MAPK8 occurs before and after exposure to stress, such as UV irradiation. After exposure to stress, interacts with phosphorylated MAPK8. Competes with DUSP10 for MAPK8 binding. Associates with multiple components of the proteasome and with ERAD regulatory proteins, including AMFR/GP78, CANX, PSMC1, PSMC2, PSMC3/TBP1, PSMC5, PSMC6, PSMD8, SEC61-ALPHA and UFD1. In terms of processing, ubiquitinated by RNF5 via 'Lys-63'-linked ubiquitin linkage in a UBE2N-dependent manner. Ubiquitination decreases association with components of the proteasome and ERAD. Expressed in numerous tissues, including brain, spleen, thymus, liver, kidney and testis.

The protein resides in the endoplasmic reticulum membrane. Regulates the duration of MAPK8 activity in response to various stress stimuli. Facilitates degradation of misfolded endoplasmic reticulum (ER) proteins through the recruitment of components of the proteasome and endoplasmic reticulum-associated degradation (ERAD) system. This chain is JNK1/MAPK8-associated membrane protein (Jkamp), found in Mus musculus (Mouse).